Reading from the N-terminus, the 141-residue chain is Large ribosomal subunit protein bL17 (141 aa).

The protein belongs to the bacterial ribosomal protein bL17 family. Part of the 50S ribosomal subunit. Contacts protein L32.

This chain is Large ribosomal subunit protein bL17, found in Maridesulfovibrio salexigens (strain ATCC 14822 / DSM 2638 / NCIMB 8403 / VKM B-1763) (Desulfovibrio salexigens).